Consider the following 217-residue polypeptide: Probable transaldolase (217 aa).

The active-site Schiff-base intermediate with substrate is lysine 84.

It belongs to the transaldolase family. Type 3B subfamily.

The protein resides in the cytoplasm. The enzyme catalyses D-sedoheptulose 7-phosphate + D-glyceraldehyde 3-phosphate = D-erythrose 4-phosphate + beta-D-fructose 6-phosphate. Its pathway is carbohydrate degradation; pentose phosphate pathway; D-glyceraldehyde 3-phosphate and beta-D-fructose 6-phosphate from D-ribose 5-phosphate and D-xylulose 5-phosphate (non-oxidative stage): step 2/3. Its function is as follows. Transaldolase is important for the balance of metabolites in the pentose-phosphate pathway. The protein is Probable transaldolase of Roseiflexus castenholzii (strain DSM 13941 / HLO8).